Reading from the N-terminus, the 765-residue chain is MKFDFLLANDGNNIPNKQIKEDKSSPYEFTSNPNKLDPYSNNINNNNNNNNNNKSSIPSSVSLSSISSISSMPISTSLSLSSPSIVISNNNPVLSNEYQQQQQQQQQQQQQQQQQQQQQQQQQQQQQQQQQPVKTVNKKNSKSNKSNANKNNNNINNNNNNYTSMYDNKIQQQLQSIYKQQQQQQQQQYQTQTQTQTQTQTQTQTQTQTQTQTQNSSGGILNINSSINNNLNIYNNTSSNKFKHQHNQQAYNQNLSEINNSRNVTTSSVNANSNINPYPNSNSSINITTTTTTTTNNEILWTTTKPTSSTKHSVILSPPKKIDSYDSPQSSPPRQSSLLISTSSPPSPPLSPIQPTNIVQSSSSSFSSPTYIQQQQQQQQQQQQQQQQQQQQQQQQQQQQQQVETVNNIGNNKSNHTSLTPNLTSLSTKDYPPMYSLNNNNSININNNNNNNNNNNNNNNNNNNNNNNNNNNNNNNNNNNKINNNHFDLNDYQDDNQSSYSSPDITTTHNRYSQQQQQQNNNNQSNYHIDHLNDKSIMKPTKKQIKKQSQPQEKLSKYSEDQIHEESEFLLASILLNLKDSNSTLPINNNNYNNNIGNFNNSTILKNISTTSSDDIGSSNNDYINGSISNEQHQYYSNKYSNQNYVQIDENNNNKNNKNNYVTNNIVNSNTDNYNYYSSHNDFDNNNNNNNNNNNNNNNNNNNNNNNNNNNNNNNNNNNNNNNNNNNNNNNNSSNNNSRNNYNNNSKKRSSSVQISPYPPSKSRI.

7 disordered regions span residues 9-61 (NDGN…PSSV), 128-164 (QQQQ…NYTS), 265-289 (TTSS…NITT), 301-373 (WTTT…TYIQ), 409-526 (IGNN…NQSN), 540-560 (PTKK…KYSE), and 668-765 (NSNT…KSRI). Composition is skewed to low complexity over residues 40–61 (SNNI…PSSV) and 143–161 (SNKS…NNNN). Low complexity-rich tracts occupy residues 301–311 (WTTTKPTSSTK), 325–344 (YDSP…STSS), 353–373 (IQPT…TYIQ), 414–428 (SNHT…SLST), 438–485 (NNNN…INNN), 495–504 (DNQSSYSSPD), and 513–526 (SQQQ…NQSN). Low complexity predominate over residues 668 to 745 (NSNTDNYNYY…NNSRNNYNNN (78 aa)).

This is an uncharacterized protein from Dictyostelium discoideum (Social amoeba).